Reading from the N-terminus, the 76-residue chain is Parvalbumin beta 3 (76 aa).

A1 is modified (N-acetylalanine). Residues 31-66 (KSPEEVKKFFAIIDQDHSGFIEEEELKLFLQTFSAG) form the EF-hand domain. 6 residues coordinate Ca(2+): D44, D46, S48, F50, E52, and E55.

This sequence belongs to the parvalbumin family.

In terms of biological role, in muscle, parvalbumin is thought to be involved in relaxation after contraction. It binds two calcium ions. The sequence is that of Parvalbumin beta 3 from Merluccius polylepis (Southern hake).